The chain runs to 445 residues: Histidinol dehydrogenase (445 aa).

NAD(+)-binding residues include Tyr136, Gln200, and Asn228. Residues Thr251, Gln273, and His276 each coordinate substrate. Zn(2+)-binding residues include Gln273 and His276. Catalysis depends on proton acceptor residues Glu342 and His343. Substrate-binding residues include His343, Asp376, Glu430, and His435. Residue Asp376 participates in Zn(2+) binding. Residue His435 participates in Zn(2+) binding.

Belongs to the histidinol dehydrogenase family. The cofactor is Zn(2+).

The catalysed reaction is L-histidinol + 2 NAD(+) + H2O = L-histidine + 2 NADH + 3 H(+). Its pathway is amino-acid biosynthesis; L-histidine biosynthesis; L-histidine from 5-phospho-alpha-D-ribose 1-diphosphate: step 9/9. Catalyzes the sequential NAD-dependent oxidations of L-histidinol to L-histidinaldehyde and then to L-histidine. This chain is Histidinol dehydrogenase (hisD), found in Mycolicibacterium smegmatis (Mycobacterium smegmatis).